The following is a 101-amino-acid chain: Small ribosomal subunit protein uS14 (101 aa).

This sequence belongs to the universal ribosomal protein uS14 family. Part of the 30S ribosomal subunit. Contacts proteins S3 and S10.

Binds 16S rRNA, required for the assembly of 30S particles and may also be responsible for determining the conformation of the 16S rRNA at the A site. The chain is Small ribosomal subunit protein uS14 from Aliivibrio fischeri (strain ATCC 700601 / ES114) (Vibrio fischeri).